Reading from the N-terminus, the 360-residue chain is MLYWLTALSDGGDFFNLFRYITFRAGGAFLTALIFGFVFGKPLINVLRKRQGKGQPIRDDGPEAHLAKVGTPTMGGLLIVGALLFSTLMWARWDNPFVWLVLFVTMSFGLIGFADDYAKVSKQNTSGVSGKVRLLLGFVIAIVAALWASWNHPAELQNQLAMPVFKDVLLNLGYLYVPFCICVIVGAANAVNLTDGLDGLAIMPVMIAAGTLGIIAYAVGRVDFSEYLDVHYVPGTGEILIFTSALFGGGLGFLWYNAPPAAVFMGDTGSLALGGALGAIAISTKHELVLAIVGGLFVVEALSVIIQVLYFKRTGRRVFLMAPIHHHYEKKGWAEPTIVIRFWIISLILAMIGLATLKVR.

A run of 10 helical transmembrane segments spans residues 27 to 47, 69 to 89, 93 to 113, 134 to 154, 168 to 188, 199 to 219, 239 to 259, 262 to 282, 288 to 308, and 337 to 357; these read GAFLTALIFGFVFGKPLINVL, VGTPTMGGLLIVGALLFSTLM, WDNPFVWLVLFVTMSFGLIGF, LLLGFVIAIVAALWASWNHPA, VLLNLGYLYVPFCICVIVGAA, GLAIMPVMIAAGTLGIIAYAV, ILIFTSALFGGGLGFLWYNAP, AVFMGDTGSLALGGALGAIAI, LVLAIVGGLFVVEALSVIIQV, and TIVIRFWIISLILAMIGLATL.

Belongs to the glycosyltransferase 4 family. MraY subfamily. Mg(2+) serves as cofactor.

The protein resides in the cell inner membrane. The enzyme catalyses UDP-N-acetyl-alpha-D-muramoyl-L-alanyl-gamma-D-glutamyl-meso-2,6-diaminopimeloyl-D-alanyl-D-alanine + di-trans,octa-cis-undecaprenyl phosphate = di-trans,octa-cis-undecaprenyl diphospho-N-acetyl-alpha-D-muramoyl-L-alanyl-D-glutamyl-meso-2,6-diaminopimeloyl-D-alanyl-D-alanine + UMP. Its pathway is cell wall biogenesis; peptidoglycan biosynthesis. Catalyzes the initial step of the lipid cycle reactions in the biosynthesis of the cell wall peptidoglycan: transfers peptidoglycan precursor phospho-MurNAc-pentapeptide from UDP-MurNAc-pentapeptide onto the lipid carrier undecaprenyl phosphate, yielding undecaprenyl-pyrophosphoryl-MurNAc-pentapeptide, known as lipid I. This Ruegeria sp. (strain TM1040) (Silicibacter sp.) protein is Phospho-N-acetylmuramoyl-pentapeptide-transferase.